Here is a 129-residue protein sequence, read N- to C-terminus: Small ribosomal subunit protein uS11 (129 aa).

This sequence belongs to the universal ribosomal protein uS11 family. In terms of assembly, part of the 30S ribosomal subunit. Interacts with proteins S7 and S18. Binds to IF-3.

Its function is as follows. Located on the platform of the 30S subunit, it bridges several disparate RNA helices of the 16S rRNA. Forms part of the Shine-Dalgarno cleft in the 70S ribosome. The chain is Small ribosomal subunit protein uS11 from Bradyrhizobium sp. (strain BTAi1 / ATCC BAA-1182).